Consider the following 369-residue polypeptide: 4-hydroxy-3-methylbut-2-en-1-yl diphosphate synthase (flavodoxin) (369 aa).

Residues cysteine 270, cysteine 273, cysteine 305, and glutamate 312 each contribute to the [4Fe-4S] cluster site.

It belongs to the IspG family. Requires [4Fe-4S] cluster as cofactor.

It carries out the reaction (2E)-4-hydroxy-3-methylbut-2-enyl diphosphate + oxidized [flavodoxin] + H2O + 2 H(+) = 2-C-methyl-D-erythritol 2,4-cyclic diphosphate + reduced [flavodoxin]. It participates in isoprenoid biosynthesis; isopentenyl diphosphate biosynthesis via DXP pathway; isopentenyl diphosphate from 1-deoxy-D-xylulose 5-phosphate: step 5/6. Functionally, converts 2C-methyl-D-erythritol 2,4-cyclodiphosphate (ME-2,4cPP) into 1-hydroxy-2-methyl-2-(E)-butenyl 4-diphosphate. The chain is 4-hydroxy-3-methylbut-2-en-1-yl diphosphate synthase (flavodoxin) from Pseudomonas savastanoi pv. phaseolicola (strain 1448A / Race 6) (Pseudomonas syringae pv. phaseolicola (strain 1448A / Race 6)).